A 317-amino-acid chain; its full sequence is Acetyl-coenzyme A carboxylase carboxyl transferase subunit alpha (317 aa).

Residues 39–293 (KLEGKAQEAL…GNAIAEAMGS (255 aa)) enclose the CoA carboxyltransferase C-terminal domain.

The protein belongs to the AccA family. In terms of assembly, acetyl-CoA carboxylase is a heterohexamer composed of biotin carboxyl carrier protein (AccB), biotin carboxylase (AccC) and two subunits each of ACCase subunit alpha (AccA) and ACCase subunit beta (AccD).

Its subcellular location is the cytoplasm. The enzyme catalyses N(6)-carboxybiotinyl-L-lysyl-[protein] + acetyl-CoA = N(6)-biotinyl-L-lysyl-[protein] + malonyl-CoA. It participates in lipid metabolism; malonyl-CoA biosynthesis; malonyl-CoA from acetyl-CoA: step 1/1. Its function is as follows. Component of the acetyl coenzyme A carboxylase (ACC) complex. First, biotin carboxylase catalyzes the carboxylation of biotin on its carrier protein (BCCP) and then the CO(2) group is transferred by the carboxyltransferase to acetyl-CoA to form malonyl-CoA. This chain is Acetyl-coenzyme A carboxylase carboxyl transferase subunit alpha, found in Azorhizobium caulinodans (strain ATCC 43989 / DSM 5975 / JCM 20966 / LMG 6465 / NBRC 14845 / NCIMB 13405 / ORS 571).